The primary structure comprises 663 residues: Shugoshin 1 (663 aa).

Coiled coils occupy residues 8 to 29 and 110 to 132; these read KQAF…RIKK and DTAE…NLLE. 3 disordered regions span residues 207 to 250, 278 to 401, and 417 to 478; these read RNTA…MNKN, EHTV…LNSG, and FRQN…ARKN. 4 stretches are compositionally biased toward basic and acidic residues: residues 231 to 242, 280 to 304, 339 to 358, and 366 to 394; these read RLEECNNEDKTE, TVVE…REID, KNKE…KAER, and KPWE…KEKM. Low complexity predominate over residues 427 to 437; that stretch reads NESSLEISSSE. A compositionally biased stretch (basic and acidic residues) spans 443-453; that stretch reads SLYKPYKDKSK.

It belongs to the shugoshin family. Binds microtubules. In terms of processing, ubiquitinated by the anaphase promoting complex (APC) at the onset of anaphase, conducting to its degradation.

It localises to the nucleus. Its subcellular location is the chromosome. It is found in the centromere. The protein resides in the kinetochore. The protein localises to the nucleus speckle. In terms of biological role, plays a central role in chromosome cohesion during mitosis by preventing premature dissociation of cohesin complex from centromeres after prophase, when most of cohesin complex dissociates from chromosomes arms. May act by preventing phosphorylation of the stag2 subunit of cohesin complex at the centromere, ensuring cohesin persistence at centromere until cohesin cleavage by espl1/separase at anaphase. May regulate kinetochore microtubule stability in mitosis, possibly to sense tension on mitotic chromosomes. This Xenopus laevis (African clawed frog) protein is Shugoshin 1.